The primary structure comprises 199 residues: Small ribosomal subunit protein uS2 (199 aa).

The protein belongs to the universal ribosomal protein uS2 family.

The sequence is that of Small ribosomal subunit protein uS2 (rps2) from Thermoplasma volcanium (strain ATCC 51530 / DSM 4299 / JCM 9571 / NBRC 15438 / GSS1).